A 560-amino-acid chain; its full sequence is uncharacterized protein (560 aa).

A signal peptide spans 1–29; sequence MKSALKKSVVSTSISLILASGMAAFAAHA. Residues aspartate 66, aspartate 67, and serine 132 each coordinate Ca(2+). Serine 132 acts as the Nucleophile in catalysis. At serine 132 the chain carries 3-oxoalanine (Ser). Residue histidine 185 is part of the active site. Ca(2+) is bound by residues aspartate 345 and asparagine 346.

It belongs to the sulfatase family. Ca(2+) is required as a cofactor. The conversion to 3-oxoalanine (also known as C-formylglycine, FGly), of a serine or cysteine residue in prokaryotes and of a cysteine residue in eukaryotes, is critical for catalytic activity.

This is an uncharacterized protein from Escherichia coli (strain K12).